We begin with the raw amino-acid sequence, 424 residues long: Serine--tRNA ligase (424 aa).

232 to 234 (TAE) is an L-serine binding site. An ATP-binding site is contributed by 263–265 (RRE). Glu-286 is an L-serine binding site. Position 350 to 353 (350 to 353 (EISS)) interacts with ATP. Ser-384 lines the L-serine pocket.

Belongs to the class-II aminoacyl-tRNA synthetase family. Type-1 seryl-tRNA synthetase subfamily. In terms of assembly, homodimer. The tRNA molecule binds across the dimer.

It localises to the cytoplasm. The enzyme catalyses tRNA(Ser) + L-serine + ATP = L-seryl-tRNA(Ser) + AMP + diphosphate + H(+). It carries out the reaction tRNA(Sec) + L-serine + ATP = L-seryl-tRNA(Sec) + AMP + diphosphate + H(+). Its pathway is aminoacyl-tRNA biosynthesis; selenocysteinyl-tRNA(Sec) biosynthesis; L-seryl-tRNA(Sec) from L-serine and tRNA(Sec): step 1/1. Its function is as follows. Catalyzes the attachment of serine to tRNA(Ser). Is also able to aminoacylate tRNA(Sec) with serine, to form the misacylated tRNA L-seryl-tRNA(Sec), which will be further converted into selenocysteinyl-tRNA(Sec). In Prochlorococcus marinus subsp. pastoris (strain CCMP1986 / NIES-2087 / MED4), this protein is Serine--tRNA ligase.